A 635-amino-acid polypeptide reads, in one-letter code: DNA mismatch repair protein MutL (635 aa).

A disordered region spans residues 359–399; sequence GTNKYAQPEAAKSSAAEQAVARERSSARERAAPAYKEDHPY. Over residues 364–377 the composition is skewed to low complexity; the sequence is AQPEAAKSSAAEQA. The segment covering 378-399 has biased composition (basic and acidic residues); that stretch reads VARERSSARERAAPAYKEDHPY.

The protein belongs to the DNA mismatch repair MutL/HexB family.

Its function is as follows. This protein is involved in the repair of mismatches in DNA. It is required for dam-dependent methyl-directed DNA mismatch repair. May act as a 'molecular matchmaker', a protein that promotes the formation of a stable complex between two or more DNA-binding proteins in an ATP-dependent manner without itself being part of a final effector complex. This chain is DNA mismatch repair protein MutL, found in Yersinia pseudotuberculosis serotype O:1b (strain IP 31758).